The chain runs to 688 residues: NADPH-dependent diflavin oxidoreductase 1 (688 aa).

A disordered region spans residues 26-76; it reads HLHRHADTSPTNQHNTSHKMTTTEPIHVTTGSGESRDHTEPRHVTPTSPNA. A compositionally biased stretch (polar residues) spans 33-58; it reads TSPTNQHNTSHKMTTTEPIHVTTGSG. Over residues 59–68 the composition is skewed to basic and acidic residues; that stretch reads ESRDHTEPRH. Positions 82 to 227 constitute a Flavodoxin-like domain; the sequence is ITIAYATETG…MYNEWQARFC (146 aa). Residues 88–93, 136–139, 174–183, and D209 contribute to the FMN site; these read TETGNA, STTG, and LGDSSYPRFN. Residues 277–543 form the FAD-binding FR-type domain; the sequence is KDVLQGTVVG…KHSTPIPDLD (267 aa). FAD contacts are provided by residues R453, 483–486, and 515–518; these read RLFS and GVLT. NADP(+)-binding positions include T554, 607-608, and 613-617; these read SR and GGYVQ. W688 is a binding site for FAD.

Belongs to the NADPH-dependent diflavin oxidoreductase NDOR1 family. It in the N-terminal section; belongs to the flavodoxin family. This sequence in the C-terminal section; belongs to the flavoprotein pyridine nucleotide cytochrome reductase family. In terms of assembly, interacts with DRE2; as part of the cytosolic iron-sulfur (Fe-S) protein assembly (CIA) machinery. The cofactor is FAD. It depends on FMN as a cofactor.

It is found in the cytoplasm. The protein localises to the mitochondrion. It catalyses the reaction 2 oxidized [2Fe-2S]-[protein] + NADPH = 2 reduced [2Fe-2S]-[protein] + NADP(+) + H(+). Functionally, NADPH-dependent reductase which is a central component of the cytosolic iron-sulfur (Fe-S) protein assembly (CIA) machinery. Transfers electrons from NADPH via its FAD and FMN prosthetic groups to the [2Fe-2S] cluster of DRE2, another key component of the CIA machinery. In turn, this reduced cluster provides electrons for assembly of cytosolic iron-sulfur cluster proteins. Positively controls H(2)O(2)-induced cell death. In Yarrowia lipolytica (strain CLIB 122 / E 150) (Yeast), this protein is NADPH-dependent diflavin oxidoreductase 1.